Here is a 73-residue protein sequence, read N- to C-terminus: Antimicrobial peptide 6 (73 aa).

An N-terminal signal peptide occupies residues 1-22 (MQIKHLITLFFLVLIVADQCSA). Positions 45 to 73 (EISTQIDQYRNLQKREAELEELLDRLPMY) are excised as a propeptide.

This sequence belongs to the non-disulfide-bridged peptide (NDBP) superfamily. Short antimicrobial peptide (group 4) family. As to expression, expressed by the venom gland.

It is found in the secreted. Its function is as follows. Antibacterial peptide. This chain is Antimicrobial peptide 6, found in Tityus costatus (Brazilian scorpion).